The primary structure comprises 246 residues: Small ribosomal subunit protein uS2 (246 aa).

Belongs to the universal ribosomal protein uS2 family.

This Pseudomonas paraeruginosa (strain DSM 24068 / PA7) (Pseudomonas aeruginosa (strain PA7)) protein is Small ribosomal subunit protein uS2.